We begin with the raw amino-acid sequence, 206 residues long: Platelet glycoprotein Ib beta chain (206 aa).

An N-terminal signal peptide occupies residues 1–26 (MGSRPRGALSLLLLLLALLSRPASGC). Cystine bridges form between cysteine 26-cysteine 32 and cysteine 30-cysteine 39. In terms of domain architecture, LRRNT spans 27 to 55 (PAPCSCAGTLVDCGRRGLTWASLPAAFPP). Topologically, residues 27-147 (PAPCSCAGTL…RAACAPGLLC (121 aa)) are extracellular. One copy of the LRR repeat lies at 60-83 (LVLTGNNLTALPPGLLDALPALRA). Asparagine 66 is a glycosylation site (N-linked (GlcNAc...) asparagine). The LRRCT domain maps to 89 to 143 (NPWRCDCRLLPLRAWLAGRPERAPYRDLRCVAPPALRGRLLPYVAEDELRAACAP). 2 cysteine pairs are disulfide-bonded: cysteine 93–cysteine 118 and cysteine 95–cysteine 141. Residues 148–172 (WGALVAQLALLVLGLLHALLLALLL) traverse the membrane as a helical segment. The Cytoplasmic segment spans residues 173-206 (GRLRRLRARARARSIQEFSLTAPLVAESARGGAS). A phosphoserine mark is found at serine 186 and serine 191. Threonine 193 is modified (phosphothreonine). The residue at position 200 (serine 200) is a Phosphoserine.

In terms of assembly, two GP-Ib beta are disulfide-linked to one GP-Ib alpha. GP-IX is complexed with the GP-Ib heterodimer via a non covalent linkage. Interacts with TRAF4.

The protein localises to the membrane. Its function is as follows. Gp-Ib, a surface membrane protein of platelets, participates in the formation of platelet plugs by binding to von Willebrand factor, which is already bound to the subendothelium. This Mus musculus (Mouse) protein is Platelet glycoprotein Ib beta chain (Gp1bb).